Reading from the N-terminus, the 662-residue chain is Chromosomal replication initiator protein DnaA (662 aa).

Residues 1-93 (MDDEQNVLAT…QVEGLGVRIA (93 aa)) are domain I, interacts with DnaA modulators. The segment at 93-322 (AAPATPTAER…STPAPANSSA (230 aa)) is domain II. The segment covering 96-105 (ATPTAERAAA) has biased composition (low complexity). The interval 96 to 294 (ATPTAERAAA…SDGPVERDDE (199 aa)) is disordered. Positions 114–123 (SRPERPRGER) are enriched in basic and acidic residues. Residues 166–199 (PPAAEYTPAAEYTPAAEYTPAAEYSPEPEYTPAT) are compositionally biased toward low complexity. 2 stretches are compositionally biased toward basic and acidic residues: residues 236–248 (TPRR…RRDA) and 261–290 (PGDR…GPVE). The interval 323–539 (SLNAKYTFET…GALIRVTAFA (217 aa)) is domain III, AAA+ region. Positions 367, 369, 370, and 371 each coordinate ATP. The segment at 540–662 (SLNGQPLDLS…LTARIKQRSR (123 aa)) is domain IV, binds dsDNA.

Belongs to the DnaA family. In terms of assembly, oligomerizes as a right-handed, spiral filament on DNA at oriC.

It localises to the cytoplasm. Functionally, plays an essential role in the initiation and regulation of chromosomal replication. ATP-DnaA binds to the origin of replication (oriC) to initiate formation of the DNA replication initiation complex once per cell cycle. Binds the DnaA box (a 9 base pair repeat at the origin) and separates the double-stranded (ds)DNA. Forms a right-handed helical filament on oriC DNA; dsDNA binds to the exterior of the filament while single-stranded (ss)DNA is stabiized in the filament's interior. The ATP-DnaA-oriC complex binds and stabilizes one strand of the AT-rich DNA unwinding element (DUE), permitting loading of DNA polymerase. After initiation quickly degrades to an ADP-DnaA complex that is not apt for DNA replication. Binds acidic phospholipids. The sequence is that of Chromosomal replication initiator protein DnaA from Nocardia farcinica (strain IFM 10152).